The following is a 236-amino-acid chain: MVLSTLIEPLPSVQSDPIPFPSGGGIVYVITDRRAAGERALTDIVSAALRGGAHVIQLRDKDVPARDMVALGQALLPLTRDAGVPLIVNDRVDVALALDADGVHVGQDDIPAEMVRRIIGPERILGVSVATVEQAQRAMDAGATYVSVGDLFGTPSKPDAGPPIGLEPLAEIARTVNLPVLGIGGINLANAASVIRAGAVGVAVISAVIGAPDPEAATRALHAVIASALDERARAG.

Residues 57–61 (QLRDK) and Asn-89 each bind 4-amino-2-methyl-5-(diphosphooxymethyl)pyrimidine. Mg(2+) is bound by residues Asp-90 and Asp-109. Ser-128 provides a ligand contact to 4-amino-2-methyl-5-(diphosphooxymethyl)pyrimidine. Residue 154–156 (TPS) coordinates 2-[(2R,5Z)-2-carboxy-4-methylthiazol-5(2H)-ylidene]ethyl phosphate. A 4-amino-2-methyl-5-(diphosphooxymethyl)pyrimidine-binding site is contributed by Lys-157. 2-[(2R,5Z)-2-carboxy-4-methylthiazol-5(2H)-ylidene]ethyl phosphate-binding positions include Gly-185 and 205–206 (IS).

It belongs to the thiamine-phosphate synthase family. Mg(2+) serves as cofactor.

It carries out the reaction 2-[(2R,5Z)-2-carboxy-4-methylthiazol-5(2H)-ylidene]ethyl phosphate + 4-amino-2-methyl-5-(diphosphooxymethyl)pyrimidine + 2 H(+) = thiamine phosphate + CO2 + diphosphate. The enzyme catalyses 2-(2-carboxy-4-methylthiazol-5-yl)ethyl phosphate + 4-amino-2-methyl-5-(diphosphooxymethyl)pyrimidine + 2 H(+) = thiamine phosphate + CO2 + diphosphate. The catalysed reaction is 4-methyl-5-(2-phosphooxyethyl)-thiazole + 4-amino-2-methyl-5-(diphosphooxymethyl)pyrimidine + H(+) = thiamine phosphate + diphosphate. The protein operates within cofactor biosynthesis; thiamine diphosphate biosynthesis; thiamine phosphate from 4-amino-2-methyl-5-diphosphomethylpyrimidine and 4-methyl-5-(2-phosphoethyl)-thiazole: step 1/1. Its function is as follows. Condenses 4-methyl-5-(beta-hydroxyethyl)thiazole monophosphate (THZ-P) and 2-methyl-4-amino-5-hydroxymethyl pyrimidine pyrophosphate (HMP-PP) to form thiamine monophosphate (TMP). This chain is Thiamine-phosphate synthase, found in Roseiflexus sp. (strain RS-1).